Reading from the N-terminus, the 77-residue chain is Sec-independent protein translocase protein TatA (77 aa).

A helical membrane pass occupies residues 2 to 22 (GFGGISIWQLLIILLIVVMLF). Basic and acidic residues-rich tracts occupy residues 46–59 (DNGE…EEPK) and 66–77 (QARKVEEPAKKD). Residues 46–77 (DNGEAEKPAVEEPKGQTIDAQARKVEEPAKKD) form a disordered region.

This sequence belongs to the TatA/E family. In terms of assembly, the Tat system comprises two distinct complexes: a TatABC complex, containing multiple copies of TatA, TatB and TatC subunits, and a separate TatA complex, containing only TatA subunits. Substrates initially bind to the TatABC complex, which probably triggers association of the separate TatA complex to form the active translocon.

Its subcellular location is the cell inner membrane. Its function is as follows. Part of the twin-arginine translocation (Tat) system that transports large folded proteins containing a characteristic twin-arginine motif in their signal peptide across membranes. TatA could form the protein-conducting channel of the Tat system. This chain is Sec-independent protein translocase protein TatA, found in Ectopseudomonas mendocina (strain ymp) (Pseudomonas mendocina).